The chain runs to 289 residues: Diaminopimelate epimerase (289 aa).

Residues asparagine 13, glutamine 52, and asparagine 72 each coordinate substrate. Residue cysteine 81 is the Proton donor of the active site. Residues 82-83 (GN), asparagine 167, asparagine 201, and 219-220 (ER) each bind substrate. Catalysis depends on cysteine 228, which acts as the Proton acceptor. 229 to 230 (GT) contributes to the substrate binding site.

This sequence belongs to the diaminopimelate epimerase family. In terms of assembly, homodimer.

It localises to the cytoplasm. The enzyme catalyses (2S,6S)-2,6-diaminopimelate = meso-2,6-diaminopimelate. The protein operates within amino-acid biosynthesis; L-lysine biosynthesis via DAP pathway; DL-2,6-diaminopimelate from LL-2,6-diaminopimelate: step 1/1. Functionally, catalyzes the stereoinversion of LL-2,6-diaminopimelate (L,L-DAP) to meso-diaminopimelate (meso-DAP), a precursor of L-lysine and an essential component of the bacterial peptidoglycan. This chain is Diaminopimelate epimerase, found in Caulobacter sp. (strain K31).